Consider the following 207-residue polypeptide: Putative 3-methyladenine DNA glycosylase (207 aa).

It belongs to the DNA glycosylase MPG family.

This Listeria welshimeri serovar 6b (strain ATCC 35897 / DSM 20650 / CCUG 15529 / CIP 8149 / NCTC 11857 / SLCC 5334 / V8) protein is Putative 3-methyladenine DNA glycosylase.